Consider the following 217-residue polypeptide: Phosphatidylserine decarboxylase proenzyme (217 aa).

The active-site Schiff-base intermediate with substrate; via pyruvic acid is Ser-182. Ser-182 is subject to Pyruvic acid (Ser); by autocatalysis.

This sequence belongs to the phosphatidylserine decarboxylase family. PSD-A subfamily. As to quaternary structure, heterodimer of a large membrane-associated beta subunit and a small pyruvoyl-containing alpha subunit. It depends on pyruvate as a cofactor. In terms of processing, is synthesized initially as an inactive proenzyme. Formation of the active enzyme involves a self-maturation process in which the active site pyruvoyl group is generated from an internal serine residue via an autocatalytic post-translational modification. Two non-identical subunits are generated from the proenzyme in this reaction, and the pyruvate is formed at the N-terminus of the alpha chain, which is derived from the carboxyl end of the proenzyme. The post-translation cleavage follows an unusual pathway, termed non-hydrolytic serinolysis, in which the side chain hydroxyl group of the serine supplies its oxygen atom to form the C-terminus of the beta chain, while the remainder of the serine residue undergoes an oxidative deamination to produce ammonia and the pyruvoyl prosthetic group on the alpha chain.

It localises to the cell membrane. The catalysed reaction is a 1,2-diacyl-sn-glycero-3-phospho-L-serine + H(+) = a 1,2-diacyl-sn-glycero-3-phosphoethanolamine + CO2. The protein operates within phospholipid metabolism; phosphatidylethanolamine biosynthesis; phosphatidylethanolamine from CDP-diacylglycerol: step 2/2. Catalyzes the formation of phosphatidylethanolamine (PtdEtn) from phosphatidylserine (PtdSer). This chain is Phosphatidylserine decarboxylase proenzyme, found in Prosthecochloris aestuarii (strain DSM 271 / SK 413).